The sequence spans 370 residues: tRNA-specific 2-thiouridylase MnmA (370 aa).

ATP contacts are provided by residues 14 to 21 (GMSGGVDS) and M40. Residues 100-102 (NPD) are interaction with target base in tRNA. The active-site Nucleophile is C105. C105 and C205 are disulfide-bonded. G129 serves as a coordination point for ATP. Positions 155-157 (KDQ) are interaction with tRNA. Catalysis depends on C205, which acts as the Cysteine persulfide intermediate. Positions 321–322 (RY) are interaction with tRNA.

The protein belongs to the MnmA/TRMU family.

Its subcellular location is the cytoplasm. The enzyme catalyses S-sulfanyl-L-cysteinyl-[protein] + uridine(34) in tRNA + AH2 + ATP = 2-thiouridine(34) in tRNA + L-cysteinyl-[protein] + A + AMP + diphosphate + H(+). Functionally, catalyzes the 2-thiolation of uridine at the wobble position (U34) of tRNA, leading to the formation of s(2)U34. This Bordetella avium (strain 197N) protein is tRNA-specific 2-thiouridylase MnmA.